We begin with the raw amino-acid sequence, 738 residues long: Melanotransferrin (738 aa).

The signal sequence occupies residues 1–19; that stretch reads MRLLSVTFWLLLSLRTVVC. 2 consecutive Transferrin-like domains span residues 23-357 and 366-706; these read VQWC…GLLC and LRWC…GMLS. Cystine bridges form between C26-C63 and C36-C54. Residues D78 and Y107 each contribute to the Fe(3+) site. Residue N118 is glycosylated (N-linked (GlcNAc...) asparagine). Cystine bridges form between C130–C216, C172–C189, C186–C199, and C257–C271. T132 contacts hydrogencarbonate. The N-linked (GlcNAc...) asparagine glycan is linked to N135. The hydrogencarbonate site is built by R136, V138, and G139. A Fe(3+)-binding site is contributed by Y210. Residues H279 and Y451 each contribute to the Fe(3+) site. S462 carries the phosphoserine modification. N-linked (GlcNAc...) asparagine glycosylation occurs at N515. Y556 and H625 together coordinate Fe(3+). The GPI-anchor amidated cysteine moiety is linked to residue C709. The propeptide at 710–738 is removed in mature form; the sequence is SGAGAAVQRVPLLALLLLTLAAGLLPRVL.

The protein belongs to the transferrin family.

It is found in the cell membrane. In terms of biological role, involved in iron cellular uptake. Seems to be internalized and then recycled back to the cell membrane. Binds a single atom of iron per subunit. Could also bind zinc. This Mus musculus (Mouse) protein is Melanotransferrin (Meltf).